Reading from the N-terminus, the 122-residue chain is Large ribosomal subunit protein uL14 (122 aa).

Belongs to the universal ribosomal protein uL14 family. As to quaternary structure, part of the 50S ribosomal subunit. Forms a cluster with proteins L3 and L19. In the 70S ribosome, L14 and L19 interact and together make contacts with the 16S rRNA in bridges B5 and B8.

Functionally, binds to 23S rRNA. Forms part of two intersubunit bridges in the 70S ribosome. This chain is Large ribosomal subunit protein uL14, found in Pseudomonas entomophila (strain L48).